Here is a 92-residue protein sequence, read N- to C-terminus: C-C motif chemokine 4 (92 aa).

The signal sequence occupies residues 1–23 (MKLCVSAFSLLLLVAAFCDSVLS). Disulfide bonds link C34–C58 and C35–C74.

Belongs to the intercrine beta (chemokine CC) family. Homodimer.

The protein resides in the secreted. In terms of biological role, monokine with inflammatory and chemokinetic properties. The protein is C-C motif chemokine 4 (Ccl4) of Rattus norvegicus (Rat).